We begin with the raw amino-acid sequence, 592 residues long: Zinc metalloproteinase dpy-31 (592 aa).

The signal sequence occupies residues 1 to 18 (MHKIFIIFGLLSLCAAHS). Residues 19–127 (LRDLSNKDEE…TEGKTRVKRK (109 aa)) constitute a propeptide that is removed on maturation. Positions 22 to 46 (LSNKDEEDPPSSAPGVRKRRMMSEE) are disordered. One can recognise a Peptidase M12A domain in the interval 127–326 (KFIGSNLRRW…IRLMNKIYCS (200 aa)). Asn-167 carries N-linked (GlcNAc...) asparagine glycosylation. 2 disulfides stabilise this stretch: Cys-170-Cys-325 and Cys-193-Cys-214. Position 222 (His-222) interacts with Zn(2+). Glu-223 is a catalytic residue. Residues His-226 and His-232 each coordinate Zn(2+). The 13-residue stretch at 349–361 (CRCPDGFTGQYCE) folds into the EGF-like domain. The cysteines at positions 371 and 399 are disulfide-linked. The CUB domain occupies 371–487 (CGGKISLTRS…KGFEARARAV (117 aa)). Asn-438 carries an N-linked (GlcNAc...) asparagine glycan. Residues 490–540 (AGNWNSWSPWTACSATCGACGSRMRTRTCPPGNACSGEPVETQICNTQACT) form the TSP type-1 domain. Intrachain disulfides connect Cys-502/Cys-534, Cys-506/Cys-539, and Cys-518/Cys-524.

The cofactor is Zn(2+). Expressed in hypodermis, rectal and vulval epithelial cells and amphid socket cells.

The protein resides in the secreted. In terms of biological role, metalloprotease which cleaves the carboxyl terminus of procollagens, such as sqt-3, to mature collagens. Involved in cuticular collagen maturation. The protein is Zinc metalloproteinase dpy-31 of Caenorhabditis elegans.